Reading from the N-terminus, the 858-residue chain is Myosin-K heavy chain (858 aa).

The region spanning 7-820 (SGVDDLVLVS…TIFVMEDLLM (814 aa)) is the Myosin motor domain. 100 to 107 (GESGAGKT) contacts ATP. The interval 121–265 (SPNNSSGGGI…GGGYGGSSKT (145 aa)) is disordered. Composition is skewed to gly residues over residues 126-139 (SGGG…GNGG) and 157-182 (RGMG…SRGG). Residues 183–228 (GPPPTRGRGGPPPPIPQNRGAPPPVSNGGAPPPVARGPVAPPPTRG) are compositionally biased toward pro residues. Over residues 233–245 (RGGGPANRGGRGG) the composition is skewed to gly residues. Residues 712-722 (PHYIRCIKPND) form an actin-binding region. Residues 821–858 (QKIDPIGYKNRVQAYKENEKLAQMKQGKHSMKQKCLIQ) form a tail region.

Belongs to the TRAFAC class myosin-kinesin ATPase superfamily. Myosin family.

The protein localises to the cytoplasm. In terms of biological role, myosins are actin-based motor molecules with ATPase activity. Involved in phagocytosis and motility, and in the maintenance and dynamics of cell cortex. This is Myosin-K heavy chain (myoK) from Dictyostelium discoideum (Social amoeba).